A 625-amino-acid chain; its full sequence is Clathrin interactor 1 (625 aa).

The ENTH domain occupies 16 to 149 (NVVMNYSEIE…QDDDRLREER (134 aa)). An a 1,2-diacyl-sn-glycero-3-phospho-(1D-myo-inositol-4,5-bisphosphate)-binding site is contributed by Arg-29. Residues 52–54 (FMY) form an interaction with VTI1B region. Arg-67 provides a ligand contact to a 1,2-diacyl-sn-glycero-3-phospho-(1D-myo-inositol-4,5-bisphosphate). Interaction with VTI1B regions lie at residues 94 to 96 (SER) and 142 to 153 (DDRLREERKKAK). Phosphoserine occurs at positions 163, 166, 173, 205, 210, 227, 245, and 299. The disordered stretch occupies residues 219–331 (FRRKDREDSP…SSGDLVDLFD (113 aa)). Basic and acidic residues predominate over residues 222–239 (KDREDSPERCSDSDEEKK). Thr-308 carries the phosphothreonine modification. A compositionally biased stretch (low complexity) spans 308–323 (TPQSSVKTSVPSSKSS). Ser-312 carries the phosphoserine modification. The tract at residues 340–352 (SADLFGGFADFGS) is interaction with AP1G1, AP1G2 and GGA2. The segment at 368 to 380 (GNGDFGDWSAFNQ) is interaction with AP1G1 and AP1G2. At Ser-624 the chain carries Phosphoserine.

The protein belongs to the epsin family. As to quaternary structure, binds clathrin heavy chain and AP-2. Interacts with VTI1B. Interacts with GGA2 (via GAE domain). Interacts with AP1G1 (via GAE domain). Interacts with AP1G2 (via GAE domain). As to expression, ubiquitously expressed at low to intermediate levels.

Its subcellular location is the cytoplasm. The protein localises to the perinuclear region. It localises to the membrane. It is found in the cytoplasmic vesicle. The protein resides in the clathrin-coated vesicle. Its function is as follows. Binds to membranes enriched in phosphatidylinositol 4,5-bisphosphate (PtdIns(4,5)P2). May have a role in transport via clathrin-coated vesicles from the trans-Golgi network to endosomes. Stimulates clathrin assembly. This is Clathrin interactor 1 (CLINT1) from Homo sapiens (Human).